The chain runs to 241 residues: Pre-rRNA-processing protein pno1 (241 aa).

The interval 48–71 is disordered; that stretch reads APAKTSAEKKRGAKPQMRRVPIPP. Phosphothreonine is present on T52. A KH domain is found at 162-214; sequence GDHLSRAIGRIAGQGGKTKFAIENASRTRIVLADSKIHILGGFTNIRIAKDAV.

It belongs to the PNO1 family. As to quaternary structure, component of the small ribosomal subunit, ribosomal RNA processing complex (SSU RRP complex).

The protein resides in the cytoplasm. Its subcellular location is the nucleus. The protein localises to the nucleolus. Functionally, required for small ribosomal subunit (SSU) synthesis. Has a role in the processing of early nucleolar and late cytoplasmic pre-RNA species. The protein is Pre-rRNA-processing protein pno1 (rbp28) of Schizosaccharomyces pombe (strain 972 / ATCC 24843) (Fission yeast).